The primary structure comprises 274 residues: Fatty-acid O-methyltransferase (274 aa).

It belongs to the methyltransferase superfamily.

It carries out the reaction a fatty acid + S-adenosyl-L-methionine = a fatty acid methyl ester + S-adenosyl-L-homocysteine. O-methyltransferase that modifies the hydroxy group of the fatty acids. Oleate is the most effective fatty acid acceptor. The sequence is that of Fatty-acid O-methyltransferase (mtf2) from Mycolicibacterium smegmatis (strain ATCC 700084 / mc(2)155) (Mycobacterium smegmatis).